We begin with the raw amino-acid sequence, 406 residues long: Tryptophan 2,3-dioxygenase (406 aa).

Phosphoserine is present on S19. Residues 72-76 and R144 each bind substrate; that span reads FIITH. H328 contacts heme. T342 serves as a coordination point for substrate.

Belongs to the tryptophan 2,3-dioxygenase family. In terms of assembly, homotetramer. Dimer of dimers. The cofactor is heme.

The catalysed reaction is L-tryptophan + O2 = N-formyl-L-kynurenine. The protein operates within amino-acid degradation; L-tryptophan degradation via kynurenine pathway; L-kynurenine from L-tryptophan: step 1/2. Its function is as follows. Heme-dependent dioxygenase that catalyzes the oxidative cleavage of the L-tryptophan (L-Trp) pyrrole ring and converts L-tryptophan to N-formyl-L-kynurenine. Catalyzes the oxidative cleavage of the indole moiety. The chain is Tryptophan 2,3-dioxygenase from Bos taurus (Bovine).